The sequence spans 358 residues: Peptide chain release factor 1 (358 aa).

The residue at position 236 (Gln236) is an N5-methylglutamine.

It belongs to the prokaryotic/mitochondrial release factor family. Post-translationally, methylated by PrmC. Methylation increases the termination efficiency of RF1.

The protein resides in the cytoplasm. Functionally, peptide chain release factor 1 directs the termination of translation in response to the peptide chain termination codons UAG and UAA. This Corynebacterium glutamicum (strain ATCC 13032 / DSM 20300 / JCM 1318 / BCRC 11384 / CCUG 27702 / LMG 3730 / NBRC 12168 / NCIMB 10025 / NRRL B-2784 / 534) protein is Peptide chain release factor 1.